The following is a 370-amino-acid chain: Phospho-N-acetylmuramoyl-pentapeptide-transferase (370 aa).

Transmembrane regions (helical) follow at residues 31–51 (LTSM…LYGL), 73–93 (TMGG…WGNL), 98–118 (IIVL…DDYM), 135–155 (LLSI…TGVI), 177–197 (GPVL…IIGS), 209–229 (GLAT…AYVS), 251–271 (VFLS…AHPA), 273–293 (VFMG…IVIL), 298–318 (ILLL…ILQV), and 347–367 (KIVI…LSTL).

Belongs to the glycosyltransferase 4 family. MraY subfamily. The cofactor is Mg(2+).

The protein localises to the cell inner membrane. The enzyme catalyses UDP-N-acetyl-alpha-D-muramoyl-L-alanyl-gamma-D-glutamyl-meso-2,6-diaminopimeloyl-D-alanyl-D-alanine + di-trans,octa-cis-undecaprenyl phosphate = di-trans,octa-cis-undecaprenyl diphospho-N-acetyl-alpha-D-muramoyl-L-alanyl-D-glutamyl-meso-2,6-diaminopimeloyl-D-alanyl-D-alanine + UMP. It functions in the pathway cell wall biogenesis; peptidoglycan biosynthesis. Functionally, catalyzes the initial step of the lipid cycle reactions in the biosynthesis of the cell wall peptidoglycan: transfers peptidoglycan precursor phospho-MurNAc-pentapeptide from UDP-MurNAc-pentapeptide onto the lipid carrier undecaprenyl phosphate, yielding undecaprenyl-pyrophosphoryl-MurNAc-pentapeptide, known as lipid I. This Leptospira borgpetersenii serovar Hardjo-bovis (strain JB197) protein is Phospho-N-acetylmuramoyl-pentapeptide-transferase.